We begin with the raw amino-acid sequence, 431 residues long: Na(+)-translocating NADH-quinone reductase subunit F (431 aa).

Residues 10–30 (IFVASAAFCSLGLILVAVILL) form a helical membrane-spanning segment. One can recognise a 2Fe-2S ferredoxin-type domain in the interval 41 to 133 (CKLKINNDDS…DLCLEVEERY (93 aa)). Residues cysteine 76, cysteine 82, cysteine 85, and cysteine 117 each contribute to the [2Fe-2S] cluster site. The region spanning 136–286 (ASSWEGTVVS…SGPYGESFMK (151 aa)) is the FAD-binding FR-type domain. Residues 289-413 (NRPVIFLIGG…ALHNSSILTL (125 aa)) are catalytic.

It belongs to the NqrF family. In terms of assembly, composed of six subunits; NqrA, NqrB, NqrC, NqrD, NqrE and NqrF. [2Fe-2S] cluster is required as a cofactor. It depends on FAD as a cofactor.

It localises to the cell inner membrane. It catalyses the reaction a ubiquinone + n Na(+)(in) + NADH + H(+) = a ubiquinol + n Na(+)(out) + NAD(+). Functionally, NQR complex catalyzes the reduction of ubiquinone-1 to ubiquinol by two successive reactions, coupled with the transport of Na(+) ions from the cytoplasm to the periplasm. The first step is catalyzed by NqrF, which accepts electrons from NADH and reduces ubiquinone-1 to ubisemiquinone by a one-electron transfer pathway. In Chlamydia trachomatis serovar D (strain ATCC VR-885 / DSM 19411 / UW-3/Cx), this protein is Na(+)-translocating NADH-quinone reductase subunit F.